Reading from the N-terminus, the 704-residue chain is E3 ubiquitin-protein ligase MBR1 (704 aa).

Disordered regions lie at residues 1 to 20, 37 to 61, 176 to 197, 245 to 354, 381 to 403, and 436 to 525; these read MNPMQGPRSIGGSSTEVNQV, NPADTGFPNNSTPSGRPTYASSSSH, SSLGSSVQAAGESSSGPASPFG, LSLA…GENQ, SNPSGIGMPAERLGPQWETPRSN, and SLFV…RHRR. Positions 43 to 61 are enriched in polar residues; the sequence is FPNNSTPSGRPTYASSSSH. Composition is skewed to low complexity over residues 184 to 196 and 245 to 255; these read AAGESSSGPASPF and LSLATPSQSSP. Polar residues-rich tracts occupy residues 281-290, 300-329, and 340-354; these read FHSTRNTDTL, RQPQESVAFSVSHGGTSVRPTGSLQQNLPL, and RSSSITSGSNTGENQ. A compositionally biased stretch (pro residues) spans 452-467; it reads QPNPTWIPPQNAPPHN. Over residues 485 to 505 the composition is skewed to low complexity; the sequence is SPSASHGGPLPLLPAGPSVSS. The RING-type; atypical zinc-finger motif lies at 656–697; that stretch reads CCICQEEYVEGDNLGTLKCGHEFHKDCIKQWVMIKNLCPICK.

The protein belongs to the RING-type zinc finger family. Interacts with MED25 and UBC11.

It catalyses the reaction S-ubiquitinyl-[E2 ubiquitin-conjugating enzyme]-L-cysteine + [acceptor protein]-L-lysine = [E2 ubiquitin-conjugating enzyme]-L-cysteine + N(6)-ubiquitinyl-[acceptor protein]-L-lysine.. Its pathway is protein modification; protein ubiquitination. Its function is as follows. E3 ubiquitin-protein ligase that functions as a regulator of MED25 stability by targeting MED25 for degradation in a RING-H2-dependent way. Proteasome-dependent degradation of MED25 seems to activate its function as positive regulator of FLOWERING LOCUS T (FT) and is important to induce the expression of FT and consequently to promote flowering. This Arabidopsis thaliana (Mouse-ear cress) protein is E3 ubiquitin-protein ligase MBR1 (MBR1).